The primary structure comprises 392 residues: Phosphoglycerate kinase (392 aa).

Substrate is bound by residues 21–23 (DLN), Arg-36, 59–62 (HLGR), Arg-113, and Arg-146. ATP-binding positions include Lys-197, Glu-319, and 345–348 (GGDT).

It belongs to the phosphoglycerate kinase family. In terms of assembly, monomer.

Its subcellular location is the cytoplasm. The catalysed reaction is (2R)-3-phosphoglycerate + ATP = (2R)-3-phospho-glyceroyl phosphate + ADP. It functions in the pathway carbohydrate degradation; glycolysis; pyruvate from D-glyceraldehyde 3-phosphate: step 2/5. This Nitrosococcus oceani (strain ATCC 19707 / BCRC 17464 / JCM 30415 / NCIMB 11848 / C-107) protein is Phosphoglycerate kinase.